Here is a 426-residue protein sequence, read N- to C-terminus: 3-phosphoshikimate 1-carboxyvinyltransferase (426 aa).

3-phosphoshikimate is bound by residues K23, S24, and R28. K23 is a phosphoenolpyruvate binding site. Positions 96 and 124 each coordinate phosphoenolpyruvate. The 3-phosphoshikimate site is built by T170, S171, Q172, S198, D314, and K341. A phosphoenolpyruvate-binding site is contributed by Q172. The active-site Proton acceptor is D314. R345, R386, and K411 together coordinate phosphoenolpyruvate.

The protein belongs to the EPSP synthase family. In terms of assembly, monomer.

It is found in the cytoplasm. It catalyses the reaction 3-phosphoshikimate + phosphoenolpyruvate = 5-O-(1-carboxyvinyl)-3-phosphoshikimate + phosphate. It functions in the pathway metabolic intermediate biosynthesis; chorismate biosynthesis; chorismate from D-erythrose 4-phosphate and phosphoenolpyruvate: step 6/7. In terms of biological role, catalyzes the transfer of the enolpyruvyl moiety of phosphoenolpyruvate (PEP) to the 5-hydroxyl of shikimate-3-phosphate (S3P) to produce enolpyruvyl shikimate-3-phosphate and inorganic phosphate. This chain is 3-phosphoshikimate 1-carboxyvinyltransferase, found in Nostoc punctiforme (strain ATCC 29133 / PCC 73102).